The following is a 384-amino-acid chain: Glucans biosynthesis protein C (384 aa).

The next 10 membrane-spanning stretches (helical) occupy residues 17–37 (AWLM…THSW), 54–74 (FIHA…SYML), 91–111 (VGIP…ILLQ), 140–160 (LWFL…FTWF), 173–193 (AISL…YAAI), 212–232 (FIVM…LAFI), 240–260 (FTTP…AYLL), 274–294 (TESV…FSLG), 311–331 (ASLF…AYIT), and 338–358 (LIGF…LYEI).

The protein belongs to the acyltransferase 3 family. OpgC subfamily.

The protein localises to the cell membrane. It participates in glycan metabolism; osmoregulated periplasmic glucan (OPG) biosynthesis. In terms of biological role, necessary for the succinyl substitution of periplasmic glucans. Could catalyze the transfer of succinyl residues from the cytoplasmic side of the membrane to the nascent glucan backbones on the periplasmic side of the membrane. The protein is Glucans biosynthesis protein C of Salmonella schwarzengrund (strain CVM19633).